The primary structure comprises 45 residues: Large ribosomal subunit protein bL34 (45 aa).

The disordered stretch occupies residues 23–45 (ETPGGKKVLSARRAKGRKNLIAK). Over residues 31–45 (LSARRAKGRKNLIAK) the composition is skewed to basic residues.

This sequence belongs to the bacterial ribosomal protein bL34 family.

The chain is Large ribosomal subunit protein bL34 from Elusimicrobium minutum (strain Pei191).